The following is a 132-amino-acid chain: Chemokine-like protein TAFA-5 (132 aa).

Residues 1-43 (MAPSPRTGSRQDATALPSMSSTFWAFMILASLLIAYCSQLAAG) form the signal peptide. Residue Asn-113 is glycosylated (N-linked (GlcNAc...) asparagine).

The protein belongs to the TAFA family. Expressed in the subcutaneous and perirenal adipose tissue (at protein level). Highly expressed in adipose tissue with moderate expression in the brain and ovary. Isoform 2: Brain-specific.

The protein resides in the secreted. Acts as a chemokine-like protein by regulating cell proliferation and migration through activation of G protein-coupled receptors (GPCRs), such as S1PR2 and FPR2. Stimulates chemotactic migration of macrophages mediated by the MAPK3/ERK1 and AKT1 pathway. Blocks TNFSF11/RANKL-induced osteoclast formation from macrophages by inhibiting up-regulation of osteoclast fusogenic and differentiation genes. Stimulation of macrophage migration and inhibition of osteoclast formation is mediated via GPCR FPR2. Acts as an adipokine by negatively regulating vascular smooth muscle cell (VSMC) proliferation and migration in response to platelet-derived growth factor stimulation via GPCR S1PR2 and G protein GNA12/GNA13-transmitted RHOA signaling. Inhibits injury-induced cell proliferation and neointima formation in the femoral arteries. The protein is Chemokine-like protein TAFA-5 of Homo sapiens (Human).